Reading from the N-terminus, the 450-residue chain is Regulator of sigma E protease (450 aa).

Position 22 (His-22) interacts with Zn(2+). Glu-23 is an active-site residue. Position 26 (His-26) interacts with Zn(2+). Residues 98-120 traverse the membrane as a helical segment; sequence AAIIAAGPVANFIFAIFAYWLVF. PDZ domains lie at 115–186 and 199–291; these read AYWL…APFG and HWAF…TPDT. 2 helical membrane passes run 376–398 and 426–445; these read VIYY…LFPL and FSYR…ALFN.

The protein belongs to the peptidase M50B family. Interacts with RseA. Zn(2+) is required as a cofactor.

Its subcellular location is the cell inner membrane. Its function is as follows. A site-2 regulated intramembrane protease (S2P) that cleaves the peptide bond between 'Ala-108' and 'Cys-109' in the transmembrane region of RseA. Part of a regulated intramembrane proteolysis (RIP) cascade. Acts on DegS-cleaved RseA to release the cytoplasmic domain of RseA. This provides the cell with sigma-E (RpoE) activity through the proteolysis of RseA. The chain is Regulator of sigma E protease (rseP) from Salmonella typhi.